The following is a 409-amino-acid chain: Na(+)/H(+) antiporter NhaA (409 aa).

A run of 11 helical transmembrane segments spans residues Ser-13–Leu-33, Leu-58–Leu-78, Ile-93–Leu-113, Phe-120–Leu-140, Ile-153–Phe-173, Ser-176–Leu-196, Val-216–Ile-236, Leu-256–Ser-276, Gly-279–Val-299, Phe-326–Ile-346, and Leu-363–Ser-383.

It belongs to the NhaA Na(+)/H(+) (TC 2.A.33) antiporter family.

The protein localises to the cell inner membrane. The enzyme catalyses Na(+)(in) + 2 H(+)(out) = Na(+)(out) + 2 H(+)(in). In terms of biological role, na(+)/H(+) antiporter that extrudes sodium in exchange for external protons. In Campylobacter concisus (strain 13826), this protein is Na(+)/H(+) antiporter NhaA.